The primary structure comprises 1035 residues: Enteropeptidase (1035 aa).

G2 carries the N-myristoyl glycine lipid modification. Topologically, residues 2–18 are cytoplasmic; that stretch reads GSKRSVPSRHRSLTTYE. The chain crosses the membrane as a helical; Signal-anchor for type II membrane protein span at residues 19 to 47; sequence VMFAVLFVILVALCAGLIAVSWLSIQGSV. Residues 48–1035 are Extracellular-facing; it reads KDAAFGKSHE…FTEWIQSFLH (988 aa). Positions 54-169 constitute an SEA domain; that stretch reads KSHEARGTLK…NSIDITASLE (116 aa). N116, N147, N170, and N194 each carry an N-linked (GlcNAc...) asparagine glycan. Positions 197–238 constitute an LDL-receptor class A 1 domain; that stretch reads IECPPDSRLCADALKCIAIDLFCDGELNCPDGSDEDNKTCAT. Disulfide bonds link C199/C212, C206/C225, C219/C236, and C240/C269. N233, N263, N264, N404, N456, N486, N519, N550, and N646 each carry an N-linked (GlcNAc...) asparagine glycan. The CUB 1 domain occupies 240-350; that stretch reads CDGRFLLTGS…IGFKVTYTAF (111 aa). The region spanning 358–520 is the MAM domain; the sequence is YEKINCNFED…ISLTYGICNV (163 aa). A disulfide bridge connects residues C540 and C568. Residues 540–650 form the CUB 2 domain; sequence CGGPHDLWEP…QGFKANFTTG (111 aa). Positions 657–695 constitute an LDL-receptor class A 2 domain; sequence EPCKEDNFQCKDGECIPLVNLCDGFPHCKDGSDEAHCVR. 3 disulfides stabilise this stretch: C659–C671, C666–C684, and C678–C693. An SRCR domain is found at 694-787; the sequence is VRLFNGTTDS…LILLQCNYKS (94 aa). Residues N698, N722, N741, and N762 are each glycosylated (N-linked (GlcNAc...) asparagine). Disulfide bonds link C773–C783, C788–C912, C826–C842, C926–C993, C957–C972, and C983–C1011. Residues 801-1035 enclose the Peptidase S1 domain; the sequence is IVGGSDSREG…FTEWIQSFLH (235 aa). H841 (charge relay system) is an active-site residue. An N-linked (GlcNAc...) asparagine glycan is attached at N864. D892 serves as the catalytic Charge relay system. N-linked (GlcNAc...) asparagine glycans are attached at residues N903 and N965. S987 functions as the Charge relay system in the catalytic mechanism.

Belongs to the peptidase S1 family. In terms of assembly, heterodimer of a catalytic (light) chain and a multidomain (heavy) chain linked by a disulfide bond. Post-translationally, the chains are derived from a single precursor that is cleaved by a trypsin-like protease. As to expression, intestinal brush border.

Its subcellular location is the membrane. The enzyme catalyses Activation of trypsinogen by selective cleavage of 6-Lys-|-Ile-7 bond.. Functionally, responsible for initiating activation of pancreatic proteolytic proenzymes (trypsin, chymotrypsin and carboxypeptidase A). It catalyzes the conversion of trypsinogen to trypsin which in turn activates other proenzymes including chymotrypsinogen, procarboxypeptidases, and proelastases. The chain is Enteropeptidase (TMPRSS15) from Bos taurus (Bovine).